The sequence spans 274 residues: tRNA-cytidine(32) 2-sulfurtransferase (274 aa).

A PP-loop motif motif is present at residues 40–45; that stretch reads SGGKDS. [4Fe-4S] cluster-binding residues include cysteine 115, cysteine 118, and cysteine 206.

It belongs to the TtcA family. As to quaternary structure, homodimer. Mg(2+) is required as a cofactor. The cofactor is [4Fe-4S] cluster.

It localises to the cytoplasm. The catalysed reaction is cytidine(32) in tRNA + S-sulfanyl-L-cysteinyl-[cysteine desulfurase] + AH2 + ATP = 2-thiocytidine(32) in tRNA + L-cysteinyl-[cysteine desulfurase] + A + AMP + diphosphate + H(+). The protein operates within tRNA modification. Its function is as follows. Catalyzes the ATP-dependent 2-thiolation of cytidine in position 32 of tRNA, to form 2-thiocytidine (s(2)C32). The sulfur atoms are provided by the cysteine/cysteine desulfurase (IscS) system. The protein is tRNA-cytidine(32) 2-sulfurtransferase of Pseudomonas paraeruginosa (strain DSM 24068 / PA7) (Pseudomonas aeruginosa (strain PA7)).